A 388-amino-acid chain; its full sequence is tRNA(Ile)-lysidine synthase (388 aa).

ATP is bound at residue 51–56 (SGGRDS).

Belongs to the tRNA(Ile)-lysidine synthase family.

It is found in the cytoplasm. The enzyme catalyses cytidine(34) in tRNA(Ile2) + L-lysine + ATP = lysidine(34) in tRNA(Ile2) + AMP + diphosphate + H(+). Its function is as follows. Ligates lysine onto the cytidine present at position 34 of the AUA codon-specific tRNA(Ile) that contains the anticodon CAU, in an ATP-dependent manner. Cytidine is converted to lysidine, thus changing the amino acid specificity of the tRNA from methionine to isoleucine. The sequence is that of tRNA(Ile)-lysidine synthase from Bifidobacterium longum subsp. infantis (strain ATCC 15697 / DSM 20088 / JCM 1222 / NCTC 11817 / S12).